Here is a 160-residue protein sequence, read N- to C-terminus: Transcriptional repressor NrdR (160 aa).

Positions 1-11 are enriched in polar residues; sequence MRCPNCNSLDT. Residues 1–20 are disordered; it reads MRCPNCNSLDTQVKDSRPTE. The segment at 3-34 is a zinc-finger region; it reads CPNCNSLDTQVKDSRPTEDSSVIRRRRVCVAC. Residues 49–139 enclose the ATP-cone domain; sequence LTVIKRNGRR…VYRNFREAKD (91 aa).

It belongs to the NrdR family. Zn(2+) serves as cofactor.

Functionally, negatively regulates transcription of bacterial ribonucleotide reductase nrd genes and operons by binding to NrdR-boxes. This is Transcriptional repressor NrdR from Bradyrhizobium diazoefficiens (strain JCM 10833 / BCRC 13528 / IAM 13628 / NBRC 14792 / USDA 110).